Consider the following 172-residue polypeptide: Endoribonuclease YbeY (172 aa).

The disordered stretch occupies residues 1-21; it reads MTLHVGAEPAPREDDTEDALR. Residues 10–21 are compositionally biased toward basic and acidic residues; the sequence is APREDDTEDALR. The Zn(2+) site is built by His-134, His-138, and His-144.

Belongs to the endoribonuclease YbeY family. Zn(2+) is required as a cofactor.

It is found in the cytoplasm. Its function is as follows. Single strand-specific metallo-endoribonuclease involved in late-stage 70S ribosome quality control and in maturation of the 3' terminus of the 16S rRNA. In Burkholderia lata (strain ATCC 17760 / DSM 23089 / LMG 22485 / NCIMB 9086 / R18194 / 383), this protein is Endoribonuclease YbeY.